Consider the following 244-residue polypeptide: 3-oxoacyl-[acyl-carrier-protein] reductase FabG (244 aa).

Residues 9–12, 60–61, and Asn-87 contribute to the NADP(+) site; these read GASR and NV. Ser-139 contributes to the substrate binding site. Tyr-152 functions as the Proton acceptor in the catalytic mechanism. NADP(+)-binding positions include 152-156 and Ile-185; that span reads YVATK.

This sequence belongs to the short-chain dehydrogenases/reductases (SDR) family. Homotetramer.

The enzyme catalyses a (3R)-hydroxyacyl-[ACP] + NADP(+) = a 3-oxoacyl-[ACP] + NADPH + H(+). Its pathway is lipid metabolism; fatty acid biosynthesis. Its function is as follows. Catalyzes the NADPH-dependent reduction of beta-ketoacyl-ACP substrates to beta-hydroxyacyl-ACP products, the first reductive step in the elongation cycle of fatty acid biosynthesis. In Staphylococcus epidermidis (strain ATCC 35984 / DSM 28319 / BCRC 17069 / CCUG 31568 / BM 3577 / RP62A), this protein is 3-oxoacyl-[acyl-carrier-protein] reductase FabG (fabG).